A 217-amino-acid chain; its full sequence is MAAGDGDVKLSTLGSGGESGGDGSPGGAGATAARSSWVAALLATGGEMLLNVALVALVLLGAYRLWVRWGRRGLCSGPGAGEESPAATLPRMKKRDFSLEQLRQYDGARTPRILLAVNGKVFDVTKGSKFYGPAGPYGIFAGRDASRGLATFCLDKDALRDEYDDLSDLNAVQMESVREWEMQFKEKYDYVGRLLKPGEEPSEYTDEEDTKDHSKQD.

O-linked (Xyl...) (chondroitin sulfate) serine glycosylation is present at serine 15. Residues 40–62 (ALLATGGEMLLNVALVALVLLGA) traverse the membrane as a helical segment. Phosphoserine occurs at positions 84, 98, and 202. Positions 96–195 (DFSLEQLRQY…EKYDYVGRLL (100 aa)) constitute a Cytochrome b5 heme-binding domain. The interval 196–217 (KPGEEPSEYTDEEDTKDHSKQD) is disordered. Residues 200-209 (EPSEYTDEED) are compositionally biased toward acidic residues. A Phosphotyrosine modification is found at tyrosine 204. Threonine 205 is modified (phosphothreonine).

Belongs to the cytochrome b5 family. MAPR subfamily. In terms of assembly, interacts with PGRMC1. Interacts with AAAS. As to expression, expressed in brown adipose tissue, white adipose tissue, liver, heart, skeletal muscle, brain and adrenal gland.

The protein localises to the membrane. Its subcellular location is the nucleus envelope. It is found in the endoplasmic reticulum. The protein resides in the secreted. Required for the maintenance of uterine histoarchitecture and normal female reproductive lifespan. May serve as a universal non-classical progesterone receptor in the uterus. Intracellular heme chaperone required for delivery of labile, or signaling heme, to the nucleus. Plays a role in adipocyte function and systemic glucose homeostasis. In brown fat, which has a high demand for heme, delivery of labile heme in the nucleus regulates the activity of heme-responsive transcriptional repressors such as NR1D1 and BACH1. This chain is Membrane-associated progesterone receptor component 2, found in Mus musculus (Mouse).